Reading from the N-terminus, the 618-residue chain is Vacuolar-sorting receptor 5 (618 aa).

Residues 1–23 form the signal peptide; it reads MSPSNKGTVLALILALTMVVVNG. The Lumenal segment spans residues 24-563; that stretch reads FSSRFFVEKS…IERRSGSRSR (540 aa). A PA domain is found at 58 to 164; sequence KYGGFMIGSV…SFGDSLKKAL (107 aa). N-linked (GlcNAc...) asparagine glycans are attached at residues N81, N293, and N430. 2 consecutive EGF-like domains span residues 412 to 462 and 465 to 511; these read ETNE…TSCK and GPAR…LKCE. 7 cysteine pairs are disulfide-bonded: C416/C434, C423/C443, C445/C461, C469/C489, C476/C497, C499/C510, and C540/C553. Residues 512–554 enclose the EGF-like 3; calcium-binding domain; sequence DIDECKEKSACKCDGCKCKNNWGGYECKCSNNSIYMKEEDTCI. An N-linked (GlcNAc...) asparagine glycan is attached at N542. Residues 564–584 form a helical membrane-spanning segment; that stretch reads GLFTIVVLTAIAGISLGAYIF. The Cytoplasmic portion of the chain corresponds to 585 to 618; that stretch reads YKYHLQSYMDSEIVSIMSQYIPLDSQSINQDSFK. Positions 604-607 match the Tyrosine-based internalization motif motif; sequence YIPL.

This sequence belongs to the VSR (BP-80) family. As to expression, expressed in seedlings, roots, leaves, flowers and siliques.

Its subcellular location is the membrane. It localises to the golgi apparatus membrane. The protein resides in the cytoplasmic vesicle. The protein localises to the clathrin-coated vesicle membrane. It is found in the prevacuolar compartment membrane. Vacuolar-sorting receptor (VSR) involved in clathrin-coated vesicles sorting from Golgi apparatus to vacuoles. The sequence is that of Vacuolar-sorting receptor 5 (VSR5) from Arabidopsis thaliana (Mouse-ear cress).